The sequence spans 273 residues: Mitochondrial distribution and morphology protein 12 (273 aa).

The 273-residue stretch at M1 to E273 folds into the SMP-LTD domain. The interval L124–R145 is disordered.

It belongs to the MDM12 family. Component of the ER-mitochondria encounter structure (ERMES) or MDM complex, composed of mmm1, mdm10, mdm12 and mdm34. A mmm1 homodimer associates with one molecule of mdm12 on each side in a pairwise head-to-tail manner, and the SMP-LTD domains of mmm1 and mdm12 generate a continuous hydrophobic tunnel for phospholipid trafficking.

The protein resides in the mitochondrion outer membrane. It localises to the endoplasmic reticulum membrane. Functionally, component of the ERMES/MDM complex, which serves as a molecular tether to connect the endoplasmic reticulum (ER) and mitochondria. Components of this complex are involved in the control of mitochondrial shape and protein biogenesis, and function in nonvesicular lipid trafficking between the ER and mitochondria. Mdm12 is required for the interaction of the ER-resident membrane protein mmm1 and the outer mitochondrial membrane-resident beta-barrel protein mdm10. The mdm12-mmm1 subcomplex functions in the major beta-barrel assembly pathway that is responsible for biogenesis of all mitochondrial outer membrane beta-barrel proteins, and acts in a late step after the SAM complex. The mdm10-mdm12-mmm1 subcomplex further acts in the TOM40-specific pathway after the action of the mdm12-mmm1 complex. Essential for establishing and maintaining the structure of mitochondria and maintenance of mtDNA nucleoids. This Schizosaccharomyces pombe (strain 972 / ATCC 24843) (Fission yeast) protein is Mitochondrial distribution and morphology protein 12.